The primary structure comprises 880 residues: Valine--tRNA ligase (880 aa).

Residues 46 to 56 (PNVTGKLHLGH) carry the 'HIGH' region motif. The 'KMSKS' region motif lies at 520 to 524 (KMSKS). An ATP-binding site is contributed by Lys-523. Residues 808–880 (LAGLINIEEE…KARIAELKEN (73 aa)) are a coiled coil.

It belongs to the class-I aminoacyl-tRNA synthetase family. ValS type 1 subfamily. In terms of assembly, monomer.

The protein resides in the cytoplasm. It carries out the reaction tRNA(Val) + L-valine + ATP = L-valyl-tRNA(Val) + AMP + diphosphate. In terms of biological role, catalyzes the attachment of valine to tRNA(Val). As ValRS can inadvertently accommodate and process structurally similar amino acids such as threonine, to avoid such errors, it has a 'posttransfer' editing activity that hydrolyzes mischarged Thr-tRNA(Val) in a tRNA-dependent manner. This is Valine--tRNA ligase from Lactococcus lactis subsp. lactis (strain IL1403) (Streptococcus lactis).